The sequence spans 335 residues: Pharynx and intestine in excess protein 1 (335 aa).

Residue Lys68 forms a Glycyl lysine isopeptide (Lys-Gly) (interchain with G-Cter in SUMO) linkage. The segment at 98–126 adopts a C3H1-type 1 zinc-finger fold; it reads EYKTRLCDAFRREGYCPYNDNCTYAHGQD. A compositionally biased stretch (basic and acidic residues) spans 130–156; the sequence is VPRRRQEYYSRDPPRERRDSRSRRDDV. Positions 130-188 are disordered; the sequence is VPRRRQEYYSRDPPRERRDSRSRRDDVDTTINRSSSSASKHHDENRRPSNNHGSSNRRQ. Polar residues-rich tracts occupy residues 158–167 and 177–187; these read TTINRSSSSA and PSNNHGSSNRR. Residues 184–211 form a C3H1-type 2 zinc finger; that stretch reads SNRRQICHNFERGNCRYGPRCRFIHVEQ. Positions 288-291 are required for inhibition of Ser-2 phosphorylation; sequence MAPT.

Interacts with hda-1, let-418 and mep-1. Interacts (via C terminus) with cit-1.1 (via C terminus). Sumoylated in adult germ cells.

The protein resides in the nucleus. It is found in the cytoplasm. Its subcellular location is the cytoskeleton. The protein localises to the microtubule organizing center. It localises to the centrosome. The protein resides in the spindle. It is found in the cytoplasmic granule. In terms of biological role, maternally provided pie-1 is required for germline cell fate determination. Functions as a repressor of RNA polymerase II-dependent gene expression in the developing germline. Required for expression of nos-2 in P4 germline blastomere cells. Inhibits the histone deacetylase activity of hda-1. Represses transcriptional activation of cdk-9 and cit-1.1, which are members of the P-TEFb complex. Acts redundantly with gei-17 to promote piRNA-mediated silencing and fertility in adult germline. Promotes the sumoylation of hda-1 in adult animals but not in embryos thereby regulating its interaction with mep-1. This Caenorhabditis elegans protein is Pharynx and intestine in excess protein 1.